The sequence spans 612 residues: Phosphomethylpyrimidine synthase (612 aa).

Disordered regions lie at residues 1-33 (MTIK…TEAG) and 105-146 (AGRP…RDGN). Residues 12-24 (TQNTAQADTAENT) show a composition bias toward low complexity. Residues 105-117 (AGRPVRPEDDGIK) show a composition bias toward basic and acidic residues. Substrate-binding positions include Asn213, Met242, Tyr271, His307, 327–329 (SRG), 368–371 (DGLR), and Glu407. His411 serves as a coordination point for Zn(2+). Tyr434 lines the substrate pocket. His475 is a binding site for Zn(2+). Residues Cys555, Cys558, and Cys563 each coordinate [4Fe-4S] cluster.

Belongs to the ThiC family. Requires [4Fe-4S] cluster as cofactor.

The catalysed reaction is 5-amino-1-(5-phospho-beta-D-ribosyl)imidazole + S-adenosyl-L-methionine = 4-amino-2-methyl-5-(phosphooxymethyl)pyrimidine + CO + 5'-deoxyadenosine + formate + L-methionine + 3 H(+). It participates in cofactor biosynthesis; thiamine diphosphate biosynthesis. Its function is as follows. Catalyzes the synthesis of the hydroxymethylpyrimidine phosphate (HMP-P) moiety of thiamine from aminoimidazole ribotide (AIR) in a radical S-adenosyl-L-methionine (SAM)-dependent reaction. This is Phosphomethylpyrimidine synthase from Streptomyces coelicolor (strain ATCC BAA-471 / A3(2) / M145).